The primary structure comprises 443 residues: Xaa-Pro dipeptidase (443 aa).

Residues D244, D255, H336, E381, and E420 each coordinate Mn(2+).

This sequence belongs to the peptidase M24B family. Bacterial-type prolidase subfamily. It depends on Mn(2+) as a cofactor.

It carries out the reaction Xaa-L-Pro dipeptide + H2O = an L-alpha-amino acid + L-proline. Functionally, splits dipeptides with a prolyl residue in the C-terminal position. The sequence is that of Xaa-Pro dipeptidase from Stenotrophomonas maltophilia (strain K279a).